The sequence spans 125 residues: RutC family protein aq_364 (125 aa).

The protein belongs to the RutC family.

The sequence is that of RutC family protein aq_364 from Aquifex aeolicus (strain VF5).